Here is a 206-residue protein sequence, read N- to C-terminus: 3-isopropylmalate dehydratase small subunit (206 aa).

It belongs to the LeuD family. LeuD type 1 subfamily. Heterodimer of LeuC and LeuD.

The catalysed reaction is (2R,3S)-3-isopropylmalate = (2S)-2-isopropylmalate. The protein operates within amino-acid biosynthesis; L-leucine biosynthesis; L-leucine from 3-methyl-2-oxobutanoate: step 2/4. Functionally, catalyzes the isomerization between 2-isopropylmalate and 3-isopropylmalate, via the formation of 2-isopropylmaleate. This is 3-isopropylmalate dehydratase small subunit from Leptospira borgpetersenii serovar Hardjo-bovis (strain JB197).